The chain runs to 106 residues: uncharacterized protein (106 aa).

This is an uncharacterized protein from Pyrococcus woesei.